A 309-amino-acid polypeptide reads, in one-letter code: Zinc finger CCCH domain-containing protein 31 (309 aa).

A disordered region spans residues 1 to 36 (MEGAGAARKRSRPDTANGGAAGGKRSRETESFQTGL). 2 C3H1-type zinc fingers span residues 37 to 65 (SSKLKPCTKFFSTIGCPFGEGCHFSHFVP) and 103 to 131 (SGKTRMCTKYNTAEGCKFGDKCHFAHGER). The disordered stretch occupies residues 86 to 106 (ARAPMDHAAGGNSHPASSGKT). Residues 175–239 (SATAKISVDA…DQIKQASNMV (65 aa)) form the KH domain. Positions 249–273 (STPAKKPAGSAAGAAPAGRGGPGGR) are disordered. Residues 251-265 (PAKKPAGSAAGAAPA) show a composition bias toward low complexity. The segment at 275–302 (NYKTKLCENFVKGTCTFGDRCHFAHGEN) adopts a C3H1-type 3 zinc-finger fold.

This is Zinc finger CCCH domain-containing protein 31 from Oryza sativa subsp. japonica (Rice).